A 624-amino-acid polypeptide reads, in one-letter code: Penicillin-binding protein 4 (624 aa).

A signal peptide spans 1–21 (MTMLRKIIGWILLLCIIPLFA). Glu96 acts as the Proton donor; for transglycosylase activity in catalysis. Ser388 functions as the Acyl-ester intermediate; for transpeptidase activity in the catalytic mechanism.

The protein in the N-terminal section; belongs to the glycosyltransferase 51 family. This sequence in the C-terminal section; belongs to the transpeptidase family. The N-terminus is blocked.

The protein localises to the cell membrane. The enzyme catalyses [GlcNAc-(1-&gt;4)-Mur2Ac(oyl-L-Ala-gamma-D-Glu-L-Lys-D-Ala-D-Ala)](n)-di-trans,octa-cis-undecaprenyl diphosphate + beta-D-GlcNAc-(1-&gt;4)-Mur2Ac(oyl-L-Ala-gamma-D-Glu-L-Lys-D-Ala-D-Ala)-di-trans,octa-cis-undecaprenyl diphosphate = [GlcNAc-(1-&gt;4)-Mur2Ac(oyl-L-Ala-gamma-D-Glu-L-Lys-D-Ala-D-Ala)](n+1)-di-trans,octa-cis-undecaprenyl diphosphate + di-trans,octa-cis-undecaprenyl diphosphate + H(+). It catalyses the reaction Preferential cleavage: (Ac)2-L-Lys-D-Ala-|-D-Ala. Also transpeptidation of peptidyl-alanyl moieties that are N-acyl substituents of D-alanine.. Functionally, cell wall formation. Synthesis of cross-linked peptidoglycan from the lipid intermediates. The enzyme has a penicillin-insensitive transglycosylase N-terminal domain (formation of linear glycan strands) and a penicillin-sensitive transpeptidase C-terminal domain (cross-linking of the peptide subunits). Has a partially redundant function with PBP-2A (pbpA) during spore outgrowth. The protein is Penicillin-binding protein 4 of Bacillus subtilis (strain 168).